The chain runs to 854 residues: MSRPNASAQKSFITQALKAERDVSSATSQRQALEAAIDAAEHYMKALNLASVQKDKHALDAKCKEWLTRAEKIKESKDWQAAARFHDKTVPEPRLPVSTRKLTTREEIILLEGAKLNGFIFPPWSTSPGSDEFKREDGESPFTDKPDLHLSYPQRKVFDGWKRPSELLAKDTEDVYTKVVPVMSVPGKTDLVQDMLTDCSVVASLCATTSMLERGQCTHFLPMIYPSRGSSQPSPSGKYIFRFYFNGCFRKVIIDDRLPSSKTSRSLHVIDRKNPNFLWPALVEKAYLKLRGGYDFPGSNSGTDLWVLTGWIPEQVFLHNDDVTGDQLWKRLYRSFHQGDVLLTIGTGELTEREQRELGLVSEHDYAILDMKESKGRRQLLVKNPWAGADTAPGDNGSLSASQDLPHNPPSFEPGTFWMDCEKLLQHFENLYLNWNPEIFKYREDVHFTWDLNNGRGVAGCFVNNPQFAVSTENGGIVWLLLGKHFRTTGQPERPLDEYQANEESAFISIYVFNADGKRVSLSDGALHRGPYVDSPNTLMRLEMPPRTTYTVVVSEQSLPSLNQNFTLSAFSTCPVRMAKAQDKYMCVRKIQGSWTPSTAGGNAESSRYPLNPQFRLEIENDTDVSLLLECPNTELATHVKLFWSNGNRVSRVRSRDIIADSGDYRRGGSLVEKKALEPGSYTIVCSTFAPDQLGRFTLWVSSLVPCKTSPLPPEAAGRRTVISDIGVLPPGRDRMLASLQVPRLTRIKLITRSRQSIIGSHPVGPSPVLMTVELGQGPYKQILATSEDGTHSDAVSGVRVEDFDLQPGLEESGGIWIVIERIGGPGGQVEDHFEVEALAEERVEIGEWILEDA.

The MIT domain maps to 2-83 (SRPNASAQKS…KESKDWQAAA (82 aa)). One can recognise a Calpain catalytic domain in the interval 118 to 437 (GFIFPPWSTS…FENLYLNWNP (320 aa)). Active-site residues include C199, H364, and N384.

Belongs to the peptidase C2 family. PalB/RIM13 subfamily.

Functionally, required for the proteolytic cleavage of the transcription factor pacC in response to alkaline ambient pH. Probably is the signaling protease that mediates the first proteolytic cleavage within the signaling protease box of pacC. The protein is Calpain-like protease palB/RIM13 (palB) of Aspergillus oryzae (strain ATCC 42149 / RIB 40) (Yellow koji mold).